We begin with the raw amino-acid sequence, 468 residues long: Siroheme synthase 3 (468 aa).

The interval 1 to 204 is precorrin-2 dehydrogenase /sirohydrochlorin ferrochelatase; it reads MDYLPIFCRL…GDSASANQLA (204 aa). NAD(+) contacts are provided by residues 22–23 and 43–44; these read EV and PE. Ser128 is subject to Phosphoserine. The segment at 216-468 is uroporphyrinogen-III C-methyltransferase; that stretch reads GEVVLVGAGP…GAADAALASA (253 aa). Pro225 contacts S-adenosyl-L-methionine. The active-site Proton acceptor is Asp248. Lys270 (proton donor) is an active-site residue. S-adenosyl-L-methionine contacts are provided by residues 301 to 303, Ile306, 331 to 332, Met383, and Gly412; these read GGD and TA.

In the N-terminal section; belongs to the precorrin-2 dehydrogenase / sirohydrochlorin ferrochelatase family. The protein in the C-terminal section; belongs to the precorrin methyltransferase family.

The enzyme catalyses uroporphyrinogen III + 2 S-adenosyl-L-methionine = precorrin-2 + 2 S-adenosyl-L-homocysteine + H(+). It carries out the reaction precorrin-2 + NAD(+) = sirohydrochlorin + NADH + 2 H(+). The catalysed reaction is siroheme + 2 H(+) = sirohydrochlorin + Fe(2+). Its pathway is cofactor biosynthesis; adenosylcobalamin biosynthesis; precorrin-2 from uroporphyrinogen III: step 1/1. It functions in the pathway cofactor biosynthesis; adenosylcobalamin biosynthesis; sirohydrochlorin from precorrin-2: step 1/1. The protein operates within porphyrin-containing compound metabolism; siroheme biosynthesis; precorrin-2 from uroporphyrinogen III: step 1/1. It participates in porphyrin-containing compound metabolism; siroheme biosynthesis; siroheme from sirohydrochlorin: step 1/1. Its pathway is porphyrin-containing compound metabolism; siroheme biosynthesis; sirohydrochlorin from precorrin-2: step 1/1. Multifunctional enzyme that catalyzes the SAM-dependent methylations of uroporphyrinogen III at position C-2 and C-7 to form precorrin-2 via precorrin-1. Then it catalyzes the NAD-dependent ring dehydrogenation of precorrin-2 to yield sirohydrochlorin. Finally, it catalyzes the ferrochelation of sirohydrochlorin to yield siroheme. The polypeptide is Siroheme synthase 3 (Aeromonas hydrophila subsp. hydrophila (strain ATCC 7966 / DSM 30187 / BCRC 13018 / CCUG 14551 / JCM 1027 / KCTC 2358 / NCIMB 9240 / NCTC 8049)).